Reading from the N-terminus, the 483-residue chain is Auxin transporter-like protein 2 (483 aa).

The Cytoplasmic segment spans residues 1–53 (MENGEKAAETVVVGNYVEMEKDGKALDIKSKLSDMFWHGGSAYDAWFSCASNQ). A helical membrane pass occupies residues 54 to 71 (VAQVLLTLPYSFSQLGML). The Extracellular segment spans residues 72–73 (SG). Residues 74–94 (ILFQLFYGILGSWTAYLISIL) traverse the membrane as a helical segment. The Cytoplasmic segment spans residues 95–130 (YVEYRTRKEREKVNFRNHVIQWFEVLDGLLGKHWRN). The helical transmembrane segment at 131-151 (VGLAFNCTFLLFGSVIQLIAC) threads the bilayer. The Extracellular portion of the chain corresponds to 152–166 (ASNIYYINDNLDKRT). Residues 167–187 (WTYIFGACCATTVFIPSFHNY) form a helical membrane-spanning segment. At 188–190 (RIW) the chain is on the cytoplasmic side. A helical transmembrane segment spans residues 191–211 (SFLGLLMTTYTAWYLTIASIL). Topologically, residues 212–226 (HGQVEGVKHSGPSKL) are extracellular. The chain crosses the membrane as a helical span at residues 227 to 247 (VLYFTGATNILYTFGGHAVTV). Topologically, residues 248-261 (EIMHAMWKPQKFKS) are cytoplasmic. The chain crosses the membrane as a helical span at residues 262–282 (IYLFATLYVLTLTLPSASAVY). The Extracellular portion of the chain corresponds to 283–306 (WAFGDLLLNHSNAFALLPKNLYRD). N291 carries N-linked (GlcNAc...) asparagine glycosylation. The helical transmembrane segment at 307-327 (FAVVLMLIHQFITFGFACTPL) threads the bilayer. Topologically, residues 328–350 (YFVWEKLIGMHECRSMCKRAAAR) are cytoplasmic. Residues 351 to 371 (LPVVIPIWFLAIIFPFFGPIN) traverse the membrane as a helical segment. The Extracellular segment spans residues 372 to 374 (STV). Residues 375-395 (GSLLVSFTVYIIPALAHIFTF) traverse the membrane as a helical segment. Topologically, residues 396–422 (RSSAARENAVEQPPRFLGRWTGAFTIN) are cytoplasmic. A helical membrane pass occupies residues 423–443 (AFIVVWVFIVGFGFGGWASMI). Residues 444 to 483 (NFVHQIDTFGLFTKCYQCPPPVMVSPPPISHPHFNHTHGL) lie on the Extracellular side of the membrane. An N-linked (GlcNAc...) asparagine glycan is attached at N478.

Belongs to the amino acid/polyamine transporter 2 family. Amino acid/auxin permease (AAAP) (TC 2.A.18.1) subfamily.

The protein localises to the cell membrane. Its function is as follows. Carrier protein involved in proton-driven auxin influx. Mediates the formation of auxin gradient from developing leaves (site of auxin biosynthesis) to tips by contributing to the loading of auxin in vascular tissues and facilitating acropetal (base to tip) auxin transport within inner tissues of the root apex, and basipetal (tip to base) auxin transport within outer tissues of the root apex. In Arabidopsis thaliana (Mouse-ear cress), this protein is Auxin transporter-like protein 2 (LAX2).